A 439-amino-acid chain; its full sequence is Prenyltransferase iacE (439 aa).

Residues 88 to 89, E97, R112, K198, Y200, R271, K273, and Y275 contribute to the substrate site; that span reads WI.

It belongs to the tryptophan dimethylallyltransferase family.

It catalyses the reaction siccayne + dimethylallyl diphosphate = pestalodiol + diphosphate. Its pathway is secondary metabolite biosynthesis. Prenyltransferase; part of the gene cluster that mediates the biosynthesis of iso-A82775C, a enylepoxycyclohexane and biosynthetic precursor of the chloropestolide anticancer natural products. Within the cluster, the prenyltransferase iacE prenylates siccayne to generate pestalodiol E, using dimethylallyl diphosphate (DMAPP) as cosubstrate. The probable oxidoreductase iacF is then involved in the epoxidation of pestalodiol F to pestalodiol F, which is further converted to pestalofone A by the short-chain dehydrogenase/reductase iacG. Iso-A82775C is subsequently generated from pestalofone A by the short-chain dehydrogenase/reductase iacC. Iso-A82775C is further condensed with maldoxin via a Diels-Alder reaction to produce the anticancer natural products chloropestolides A to E. This chain is Prenyltransferase iacE, found in Pestalotiopsis fici (strain W106-1 / CGMCC3.15140).